Here is a 333-residue protein sequence, read N- to C-terminus: EP300-interacting inhibitor of differentiation 3 (333 aa).

This sequence belongs to the NSE4 family. Component of the SMC5-SMC6 complex which consists at least of SMC5, SMC6, NSMCE2, NSMCE1, NSMCE4A or EID3 and NSMCE3; EID3 seems to be a testis-specific subunit. NSMCE1, NSMCE4A or EID3 and NSMCE3 probably form a subcomplex that bridges the head domains of the SMC5:SMC6 heterodimer. Homodimer, and heterodimer with EID2. Interacts with the C-terminal region of CREBBP. In terms of tissue distribution, highly expressed in testis.

The protein resides in the nucleus. Its subcellular location is the cytoplasm. The protein localises to the chromosome. It is found in the telomere. In terms of biological role, tissue-specific component of the SMC5-SMC6 complex, a complex involved in repair of DNA double-strand breaks by homologous recombination. The complex may promote sister chromatid homologous recombination by recruiting the SMC1-SMC3 cohesin complex to double-strand breaks. The complex is required for telomere maintenance via recombination and mediates sumoylation of shelterin complex (telosome) components. Functionally, acts as a repressor of nuclear receptor-dependent transcription possibly by interfering with CREBBP-dependent coactivation. May function as a coinhibitor of other CREBBP/EP300-dependent transcription factors. In Homo sapiens (Human), this protein is EP300-interacting inhibitor of differentiation 3.